The primary structure comprises 172 residues: Ribosome maturation factor RimM (172 aa).

The 74-residue stretch at 94–167 (EGSYYYKDII…VAHVIVPEGL (74 aa)) folds into the PRC barrel domain.

It belongs to the RimM family. In terms of assembly, binds ribosomal protein uS19.

Its subcellular location is the cytoplasm. Its function is as follows. An accessory protein needed during the final step in the assembly of 30S ribosomal subunit, possibly for assembly of the head region. Essential for efficient processing of 16S rRNA. May be needed both before and after RbfA during the maturation of 16S rRNA. It has affinity for free ribosomal 30S subunits but not for 70S ribosomes. The protein is Ribosome maturation factor RimM of Lacticaseibacillus paracasei (strain ATCC 334 / BCRC 17002 / CCUG 31169 / CIP 107868 / KCTC 3260 / NRRL B-441) (Lactobacillus paracasei).